The sequence spans 1066 residues: MTWKNFGFEIFGEKYGQEELEKRIKDEHTPPPDSPVFGGLKLKLKKEKFKTLFTLGTTLKGFRRATHTVGTGGIGEITIVNDPKFPEHEFFTAGRTFPARLRHANLKYPDDAGADARSFSIKFADSDSDGPLDIVMNTGEANIFWNSPSLEDFVPVEEGDAAEEYVYKNPYYYYNLVEALRRAPDTFAHLYYYSQVTMPFKAKDGKVRYCRYRALPGDVDIKEEDESGRLTEEEQRKIWIFSRHENEKRPDDYLRKEYVERLQKGPVNYRLQIQIHEASPDDTATIFHAGILWDKETHPWFDLAKVSIKTPLSPDVLEKTAFNIANQPASLGLLEAKSPEDYNSIGELRVAVYTWVQHLRKLKIGSLVPAGQNAIYNVEVETGDREHAGTDATITIRITGAKGRTDYLKLDKWFHNDFEAGSKEQYTVQGFDVGDIQLIELHSDGGGYWSGDPDWFVNRVIIISSTQDRVYSFPCFRWVIKDMVLFPGEATLPFNEVPAIVSEQRQKELEQRKLTYQWDYVSDDMPGNIKAKTHDDLPRDVQFTDEKSRSYQESRKAALVNLGIGSLFTMFENWDSYDDYHILYRNWILGGTPNMADRWHEDRWFGYQFLNGANPVILTRCDALPSNFPVTNEHVNASLDRGKNLDEEIKDGHIYIVDFKVLVGAKSYGGPVLEDIGYKVPDHLKHDEADIRYCAAPLALFYVNKLGHLMPIAIQINQEPGPENPIWTPHEENEHDWMMAKFWLGVAESNFHQLNTHLLRTHLTTESFALSTWRNLASAHPVFKLLQPHIYGVLAIDTIGRKELIGSGGIVDQSLSLGGGGHVTFMEKCFKEVNLQDYHLPNALKKRGVDDPSKLPGFYYRDDGLALWEAIETFIGEIIAIFYKNDDDVKRDNEIQSWIYDVHKNGWRVNPGHQDHGVPASFESREQLKEVLTSLVFTFSCQHAAVNFSQKDHYGFTPNAPAVLRHPPPKKKGEATLQSILSTLPSKSQAAKAIATVYILTKFSEDERYLGNYSATAWEDKDALDAINRFQDKLEDISKKIKQRNENLEVPYIYLLPERIPNGTAI.

Positions 1 to 371 are allene oxide synthase; sequence MTWKNFGFEI…LKIGSLVPAG (371 aa). Residue tyrosine 353 coordinates heme. The arachidonate 8-lipoxygenase stretch occupies residues 372-1066; that stretch reads QNAIYNVEVE…PERIPNGTAI (695 aa). One can recognise a PLAT domain in the interval 374-490; sequence AIYNVEVETG…KDMVLFPGEA (117 aa). Residues histidine 387, glycine 389, threonine 390, aspartate 391, asparagine 416, aspartate 417, glutamate 419, aspartate 452, and aspartate 454 each contribute to the Ca(2+) site. Positions 491–1066 constitute a Lipoxygenase domain; the sequence is TLPFNEVPAI…PERIPNGTAI (576 aa). The Fe cation site is built by histidine 757, histidine 762, histidine 943, asparagine 947, and isoleucine 1066.

This sequence in the C-terminal section; belongs to the lipoxygenase family. Dimer. It depends on Ca(2+) as a cofactor. Requires Fe cation as cofactor. Heme serves as cofactor.

It is found in the cytoplasm. It localises to the membrane. The catalysed reaction is (5Z,8Z,11Z,14Z)-eicosatetraenoate + O2 = (8R)-hydroperoxy-(5Z,9E,11Z,14Z)-eicosatetraenoate. It catalyses the reaction (8R)-hydroperoxy-(5Z,9E,11Z,14Z)-eicosatetraenoate = 8,9-epoxy-(5Z,9E,11Z,14Z)-eicosatetraenoate + H2O. The enzyme catalyses (5Z,8Z,11Z,14Z,17Z)-eicosapentaenoate + O2 = (8R)-hydroperoxy-(5Z,9E,11Z,14Z,17Z)-eicosapentaenoate. It carries out the reaction (4Z,7Z,10Z,13Z,16Z,19Z)-docosahexaenoate + O2 = 10-hydroperoxy-(4Z,7Z,11E,13Z,16Z,19Z)-docosahexaenoate. The catalysed reaction is (8Z,11Z,14Z)-eicosatrienoate + O2 = (8R)-hydroperoxy-(9E,11Z,14Z)-eicosatrienoate. It catalyses the reaction (8Z,11Z,14Z)-eicosatrienoate + O2 = 10-hydroperoxy-(8Z,11Z,14Z)-eicosatrienoate. The enzyme catalyses (8Z,11Z,14Z)-eicosatrienoate + O2 = 11-hydroperoxy-(8Z,12E,14Z)-eicosatrienoate. It functions in the pathway lipid metabolism; arachidonate metabolism. The protein operates within lipid metabolism; fatty acid metabolism. Lipoxygenase activity is stimulated by calcium, sodium, lithium and potassium ions. Calcium binding promotes interaction with membranes and thus facilitates access to substrates. Functionally, bifunctional enzyme which is responsible for allene oxide biosynthesis via a two-step reaction; first the lipoxygenase reaction that converts polyunsaturated fatty acids such as arachidonate ((5Z,8Z,11Z,14Z)-eicosatetraenoate) into a (8R)-hydroperoxide intermediate ((8R)-hydroperoxy-(5Z,9E,11Z,14Z)-eicosatetraenoate) followed by the allene oxide synthase reaction that converts the hydroperoxide intermediate ((8R)-hydroperoxy-(5Z,9E,11Z,14Z)-eicosatetraenoate) into the allene oxide (8,9-epoxy-(5Z,9E,11Z,14Z)-eicosatetraenoate). Shows preference for C20 or C22 highly polyunsaturated fatty acids and no activity with C18 fatty acids in vitro. Fatty acid allene oxides are intermediates in the formation of cyclopentenones or hydrolytic products in marine systems, most notably the prostanoid-related clavulones. This is Allene oxide synthase-lipoxygenase protein from Plexaura homomalla (Black sea rod).